A 207-amino-acid polypeptide reads, in one-letter code: Dephospho-CoA kinase (207 aa).

Residues Val5–Lys202 enclose the DPCK domain. Gly13–Thr18 contacts ATP.

The protein belongs to the CoaE family.

Its subcellular location is the cytoplasm. The enzyme catalyses 3'-dephospho-CoA + ATP = ADP + CoA + H(+). The protein operates within cofactor biosynthesis; coenzyme A biosynthesis; CoA from (R)-pantothenate: step 5/5. Its function is as follows. Catalyzes the phosphorylation of the 3'-hydroxyl group of dephosphocoenzyme A to form coenzyme A. This is Dephospho-CoA kinase from Dechloromonas aromatica (strain RCB).